The sequence spans 213 residues: MDARILKEDDESGLPNKQADVTLLHGKPTQADAEAAVRTLLLWAGDDPEREGLLETPKRVAKAYKELFAGYTESPEEVLGTVFEEVGGYNDLVLVKDISFHSHCEHHMVPIIGKAHVAYLPDHKVVGLSKIARVVDIFARRLQTQESITAQIADSIQRILKPRGVAVMIEAEHMCMAMRGIRKQGSTTITTTFTGEMQVNAEEQVRFMTLTRR.

Cys104, His107, and Cys175 together coordinate Zn(2+).

Belongs to the GTP cyclohydrolase I family. Toroid-shaped homodecamer, composed of two pentamers of five dimers.

The enzyme catalyses GTP + H2O = 7,8-dihydroneopterin 3'-triphosphate + formate + H(+). Its pathway is cofactor biosynthesis; 7,8-dihydroneopterin triphosphate biosynthesis; 7,8-dihydroneopterin triphosphate from GTP: step 1/1. The chain is GTP cyclohydrolase 1 from Brucella anthropi (strain ATCC 49188 / DSM 6882 / CCUG 24695 / JCM 21032 / LMG 3331 / NBRC 15819 / NCTC 12168 / Alc 37) (Ochrobactrum anthropi).